A 164-amino-acid chain; its full sequence is S-ribosylhomocysteine lyase (164 aa).

Residues His54, His58, and Cys128 each coordinate Fe cation.

It belongs to the LuxS family. Homodimer. It depends on Fe cation as a cofactor.

It catalyses the reaction S-(5-deoxy-D-ribos-5-yl)-L-homocysteine = (S)-4,5-dihydroxypentane-2,3-dione + L-homocysteine. Functionally, involved in the synthesis of autoinducer 2 (AI-2) which is secreted by bacteria and is used to communicate both the cell density and the metabolic potential of the environment. The regulation of gene expression in response to changes in cell density is called quorum sensing. Catalyzes the transformation of S-ribosylhomocysteine (RHC) to homocysteine (HC) and 4,5-dihydroxy-2,3-pentadione (DPD). This chain is S-ribosylhomocysteine lyase, found in Campylobacter jejuni subsp. jejuni serotype O:23/36 (strain 81-176).